Here is a 192-residue protein sequence, read N- to C-terminus: Cytochrome b-245 light chain (192 aa).

Topologically, residues 2–7 (GQIEWA) are cytoplasmic. A helical transmembrane segment spans residues 8–30 (MWANEQALASGLILITGGIVATA). Residues 31-35 (GRFTQ) lie on the Extracellular side of the membrane. The helical transmembrane segment at 36 to 53 (WYFGAYSIAAGVLICLLE) threads the bilayer. Residues 54 to 69 (YPRGKRKKGSTMERCG) are Cytoplasmic-facing. An intramembrane segment occupies 70–80 (QKYLTSVVKLF). The Cytoplasmic segment spans residues 81–86 (GPLTRN). The chain crosses the membrane as a helical span at residues 87–104 (YYVRAALHFLLSVPAGFL). Position 105 (Leu105) is a topological domain, extracellular. A helical transmembrane segment spans residues 106 to 126 (ATILGTVCLAIASVIYLLAAI). The Cytoplasmic portion of the chain corresponds to 127 to 192 (RGEQWTPIEP…NPMPVTDEVV (66 aa)). A disordered region spans residues 134–192 (IEPKPKERPQVGGTIKQPPTNPPPRPPAEVRKKPSEGEEEAASAGGPQVNPMPVTDEVV). A Phosphothreonine modification is found at Thr147. A Glycyl lysine isopeptide (Lys-Gly) (interchain with G-Cter in ubiquitin) cross-link involves residue Lys149. Residues Ser168 and Ser176 each carry the phosphoserine modification.

It belongs to the p22phox family. As to quaternary structure, component of the phagocyte NADPH oxidase core complex/cytochrome b558 complex, composed of CYBB (heavy chain (beta)) and CYBA (light chain (alpha)). Component of the phagocyte NADPH oxidase complex composed of an obligatory core heterodimer formed by the membrane proteins CYBA and CYBB and the cytosolic regulatory subunits NCF1/p47-phox, NCF2/p67-phox, NCF4/p40-phox and the small GTPase RAC1 or RAC2. Interacts with NCF1 (via SH3 domain). Interacts with SH3PXD2A. Interacts with DUOX1, DUOX2 and TPO. Interacts with NOX4; this interaction mediates superoxide generation. Interacts with calprotectin (S100A8/9). Interacts with GBP7. Interacts with NOXO1. Forms a heterodimer with NOX3 and is essential for activity and cell membrane localization of NOX3. Interacts with NOX1. In terms of processing, ubiquitinated at Lys-149 likely by RNF145. Phosphorylation at Thr-147 enhances NADPH oxidase activity by promoting NCF1/p47-phox binding. In terms of tissue distribution, the strongest level of expression is found in kidney, peritoneal neutrophils and peritoneal macrophages, and a lower level in spleen and small intestine. Very low level of expression can be noted in brain, liver, testis, and heart.

It is found in the cell membrane. Subunit of NADPH oxidase complexes that is required for the NADPH oxidase activity that generates, in various cell types, superoxide from molecular oxygen utilizing NADPH as an electron donor. Subunit of the phagocyte NADPH oxidase complex that mediates the transfer of electrons from cytosolic NADPH to O2 to produce the superoxide anion (O2(-)). In the activated complex, electrons are first transferred from NADPH to flavin adenine dinucleotide (FAD) and subsequently transferred via two heme molecules to molecular oxygen, producing superoxide through an outer-sphere reaction. Activation of the NADPH oxidase complex is initiated by the assembly of cytosolic subunits of the NADPH oxidase complex with the core NADPH oxidase complex to form a complex at the plasma membrane or phagosomal membrane. This activation process is initiated by phosphorylation dependent binding of the cytosolic NCF1/p47-phox subunit to the C-terminus of CYBA/p22-phox. Aassociates with NOX3 to form a functional NADPH oxidase constitutively generating superoxide. The chain is Cytochrome b-245 light chain from Mus musculus (Mouse).